The following is an 874-amino-acid chain: Tyrosine-protein kinase receptor TYRO3 (874 aa).

An N-terminal signal peptide occupies residues 1 to 20 (MEVSLCILLFLLHFNEGIHG). 2 consecutive Ig-like C2-type domains span residues 21–106 (VRFT…IISS) and 117–198 (PHFG…GTVH). The Extracellular segment spans residues 21 to 411 (VRFTQKPFHQ…QAQTQRGHMW (391 aa)). A disulfide bridge links cysteine 42 with cysteine 95. N-linked (GlcNAc...) asparagine glycans are attached at residues asparagine 135, asparagine 174, asparagine 217, asparagine 270, asparagine 305, and asparagine 373. Cysteine 138 and cysteine 181 form a disulfide bridge. Fibronectin type-III domains lie at 202 to 297 (RPDS…TPQA) and 299 to 403 (PSAA…AMQA). A helical transmembrane segment spans residues 412–432 (VGLLFGLLVATMVGLLLIVLI). The Cytoplasmic portion of the chain corresponds to 433–874 (RNRGKETQFG…EEEEDVIINV (442 aa)). A Protein kinase domain is found at 497–768 (LTLGRMLGKG…QHLIDQLELL (272 aa)). ATP is bound by residues 503-511 (LGKGEFGSV) and lysine 529. Catalysis depends on aspartate 634, which acts as the Proton acceptor. Tyrosine 665 is modified (phosphotyrosine; by autocatalysis).

The protein belongs to the protein kinase superfamily. Tyr protein kinase family. AXL/UFO subfamily.

The protein resides in the cell membrane. It catalyses the reaction L-tyrosyl-[protein] + ATP = O-phospho-L-tyrosyl-[protein] + ADP + H(+). Its function is as follows. May be involved in cell adhesion processes, particularly in the central nervous system. This Danio rerio (Zebrafish) protein is Tyrosine-protein kinase receptor TYRO3 (tyro3).